The primary structure comprises 143 residues: Small ribosomal subunit protein uS11c (143 aa).

Belongs to the universal ribosomal protein uS11 family. Part of the 30S ribosomal subunit.

Its subcellular location is the plastid. It localises to the chloroplast. The polypeptide is Small ribosomal subunit protein uS11c (Oryza nivara (Indian wild rice)).